The sequence spans 194 residues: Adenylate kinase (194 aa).

ATP is bound at residue 10-15; sequence GAGKGT. The interval 30–59 is NMP; sequence STGDMLRAAVAQQSEIGKRAKAVMDAGQLV. AMP-binding positions include Thr-31, Arg-36, 57 to 59, 85 to 88, and Gln-92; these read QLV and GYPR. The LID stretch occupies residues 126–142; it reads SRVAETIAKGAQVRSDD. An ATP-binding site is contributed by Arg-127. Positions 139 and 150 each coordinate AMP. Ala-178 is an ATP binding site.

Belongs to the adenylate kinase family. As to quaternary structure, monomer.

Its subcellular location is the cytoplasm. The catalysed reaction is AMP + ATP = 2 ADP. Its pathway is purine metabolism; AMP biosynthesis via salvage pathway; AMP from ADP: step 1/1. In terms of biological role, catalyzes the reversible transfer of the terminal phosphate group between ATP and AMP. Plays an important role in cellular energy homeostasis and in adenine nucleotide metabolism. The polypeptide is Adenylate kinase (Brucella melitensis biotype 1 (strain ATCC 23456 / CCUG 17765 / NCTC 10094 / 16M)).